A 368-amino-acid polypeptide reads, in one-letter code: Repressor ROX1 (368 aa).

Residues isoleucine 10–lysine 83 constitute a DNA-binding region (HMG box). Disordered stretches follow at residues isoleucine 100–leucine 121 and serine 242–leucine 273. Over residues glutamine 102–leucine 121 the composition is skewed to low complexity.

It is found in the nucleus. Functionally, transcription factor that represses the expression of HEM13, COX5B, ANB1, CYC7 or AAC3 (hypoxic function). Binds to the DNA sequence 5'-RRRTAACAAGAG-3'. The polypeptide is Repressor ROX1 (ROX1) (Saccharomyces cerevisiae (strain ATCC 204508 / S288c) (Baker's yeast)).